Reading from the N-terminus, the 97-residue chain is Putative septation protein SpoVG (97 aa).

This sequence belongs to the SpoVG family.

In terms of biological role, could be involved in septation. This Borreliella afzelii (strain PKo) (Borrelia afzelii) protein is Putative septation protein SpoVG.